We begin with the raw amino-acid sequence, 316 residues long: Probable metal transport system membrane protein TC_0342 (316 aa).

10 consecutive transmembrane segments (helical) span residues 1–21, 39–59, 64–84, 94–114, 124–144, 171–191, 196–216, 226–246, 252–272, and 286–306; these read MFASISPYYGVSFFEFFIVFF, IQVIVFFAIAVSCSIIGTFLV, AMYANVVSHTILFGLVCACLF, QNLTIAAISTTLLTGASIHFI, ASTALVFSLLFSASLLLLVFL, FLVLLXNLGVSYCFFSSFICV, VFAFSLGIRVKLIDYLMMFLL, AVGVLMSLAFLLVPGLIAKLI, EMMGYSMIFGVLSALIAPALS, and SGLAVCLLLVFYIGTLATVFV.

The protein belongs to the ABC-3 integral membrane protein family.

The protein resides in the cell inner membrane. In terms of biological role, part of an ATP-driven transport system TC_0338/TC_0339/TC_0341/TC_0342 for a metal. The chain is Probable metal transport system membrane protein TC_0342 from Chlamydia muridarum (strain MoPn / Nigg).